We begin with the raw amino-acid sequence, 157 residues long: Small ribosomal subunit protein uS7 (157 aa).

This sequence belongs to the universal ribosomal protein uS7 family. As to quaternary structure, part of the 30S ribosomal subunit. Contacts proteins S9 and S11.

Functionally, one of the primary rRNA binding proteins, it binds directly to 16S rRNA where it nucleates assembly of the head domain of the 30S subunit. Is located at the subunit interface close to the decoding center, probably blocks exit of the E-site tRNA. The protein is Small ribosomal subunit protein uS7 of Caulobacter vibrioides (strain ATCC 19089 / CIP 103742 / CB 15) (Caulobacter crescentus).